Here is a 350-residue protein sequence, read N- to C-terminus: UDP-N-acetylenolpyruvoylglucosamine reductase (350 aa).

The 172-residue stretch at 24–195 folds into the FAD-binding PCMH-type domain; sequence HVEATARWLL…VAVEFNLPLL (172 aa). Residue arginine 172 is part of the active site. Catalysis depends on serine 245, which acts as the Proton donor. Glutamate 342 is an active-site residue.

It belongs to the MurB family. It depends on FAD as a cofactor.

It is found in the cytoplasm. It catalyses the reaction UDP-N-acetyl-alpha-D-muramate + NADP(+) = UDP-N-acetyl-3-O-(1-carboxyvinyl)-alpha-D-glucosamine + NADPH + H(+). The protein operates within cell wall biogenesis; peptidoglycan biosynthesis. Cell wall formation. The protein is UDP-N-acetylenolpyruvoylglucosamine reductase of Xanthomonas oryzae pv. oryzae (strain MAFF 311018).